The primary structure comprises 589 residues: MSQVRSPFVVVMGHVDVGKTLLLDKIRGTSVAYREPGMITQHIGMSFVPWSAVEKFAGPLVDRLRLRGRIWIPGFLFIDTPGHAAFSNLRKRGGSVADLAILVVDITSGLEEQGVESLKLIQSRGVPFVIAANKLDRIYGWKSVENRPFLFAVEDQEWHAVATLEERIGKLIEELSRHGIDADRYDRVRDFSKQVPIVPTSAVTGEGIADLLLVLAGVSQRFIPRERLQVREGPAKGVVMEVKEERGLGVVADVILYDGTLRKGDVLVTASLEGPKEARVRMLIMPKPLEEMRDPEDKFMAVEEVKAAAGVRVVADGLEGVVAGSPLIAVWDPREIPNACNLVKEEISEIRIESDKEGVIVRADTFGTLESIVLFLRQQGVPVRKADVGPPTHKDVVEAVLSRRKNPIYGVILAFNVKTPPEVEKEAMSSGIKIIAGEILYRIFDEYIKWSQEVRTKTIEQILSQLTRPGKIQILPGFVFRRSDPAIVGVKVLAGTIKPGVTLVKDGREVGRIMQIQKTGRAINEAAAGDEVAISIHGDVIVGRQIKEGDILYVYVPDDQARQWLFQYRQYLREDELKALEEYLKSRRK.

Residues 4–225 (VRSPFVVVMG…AGVSQRFIPR (222 aa)) form the tr-type G domain. Positions 13–20 (GHVDVGKT) are G1. 13–20 (GHVDVGKT) contributes to the GTP binding site. A G2 region spans residues 38 to 42 (MITQH). The interval 79–82 (DTPG) is G3. GTP is bound by residues 79-83 (DTPGH) and 133-136 (NKLD). The segment at 133–136 (NKLD) is G4. The tract at residues 201–203 (SAV) is G5.

It belongs to the TRAFAC class translation factor GTPase superfamily. Classic translation factor GTPase family. IF-2 subfamily.

Its function is as follows. Function in general translation initiation by promoting the binding of the formylmethionine-tRNA to ribosomes. Seems to function along with eIF-2. In Pyrobaculum aerophilum (strain ATCC 51768 / DSM 7523 / JCM 9630 / CIP 104966 / NBRC 100827 / IM2), this protein is Probable translation initiation factor IF-2.